The following is a 704-amino-acid chain: Neutral ceramidase (704 aa).

The N-terminal stretch at 1-23 (MAISKIAFLALIALSGLCGLASA) is a signal peptide. The N-linked (GlcNAc...) asparagine glycan is linked to N230. The active-site Nucleophile is S276. N-linked (GlcNAc...) asparagine glycosylation is found at N362, N550, and N598.

Belongs to the neutral ceramidase family. N-glycosylated.

It is found in the secreted. The catalysed reaction is an N-acylsphing-4-enine + H2O = sphing-4-enine + a fatty acid. Functionally, hydrolyzes the sphingolipid ceramide into sphingosine and free fatty acid at an optimal pH of 6.5-7.5. Acts as a key regulator of sphingolipid signaling metabolites by generating sphingosine at the cell surface. In Drosophila pseudoobscura pseudoobscura (Fruit fly), this protein is Neutral ceramidase (CDase).